Here is a 367-residue protein sequence, read N- to C-terminus: Polygalacturonase (367 aa).

The first 19 residues, 1–19 (MSIRLIAVLSAASIAVTSA), serve as a signal peptide directing secretion. The cysteines at positions 27 and 42 are disulfide-linked. A glycan (N-linked (GlcNAc...) asparagine) is linked at N185. One copy of the PbH1 1 repeat lies at 187-208 (TDQLTIEDTVVKNQDDCIAVNQ). D201 functions as the Proton donor in the catalytic mechanism. A disulfide bond links C203 and C219. Residue H223 is part of the active site. The PbH1 2 repeat unit spans residues 240–261 (VRNVTFSNSVVRKSRNGIHIKT). A glycan (N-linked (GlcNAc...) asparagine) is linked at N242. A disulfide bridge connects residues C334 and C339. N-linked (GlcNAc...) asparagine glycosylation is found at N343 and N357. A disulfide bond links C358 and C367.

It belongs to the glycosyl hydrolase 28 family. Expressed in larval carcasses and gut, and adult gut.

It localises to the secreted. Its subcellular location is the cell wall. The catalysed reaction is (1,4-alpha-D-galacturonosyl)n+m + H2O = (1,4-alpha-D-galacturonosyl)n + (1,4-alpha-D-galacturonosyl)m.. The polypeptide is Polygalacturonase (Phaedon cochleariae (Mustard beetle)).